The following is a 263-amino-acid chain: Ribonuclease 3 (263 aa).

Residues 1–23 (MPHSKNQRKHRHHSHSERRRQPK) are disordered. Residues 35–164 (FDELLRTLNL…FVGALYLDQG (130 aa)) enclose the RNase III domain. Glu-77 contributes to the Mg(2+) binding site. Asp-81 is an active-site residue. Mg(2+)-binding residues include Asp-150 and Glu-153. The active site involves Glu-153. Residues 190-259 (DFKSQLQEFI…AQQALITLSQ (70 aa)) enclose the DRBM domain.

This sequence belongs to the ribonuclease III family. As to quaternary structure, homodimer. Requires Mg(2+) as cofactor.

The protein resides in the cytoplasm. It carries out the reaction Endonucleolytic cleavage to 5'-phosphomonoester.. Digests double-stranded RNA. Involved in the processing of primary rRNA transcript to yield the immediate precursors to the large and small rRNAs (23S and 16S). Processes some mRNAs, and tRNAs when they are encoded in the rRNA operon. Processes pre-crRNA and tracrRNA of type II CRISPR loci if present in the organism. In Halalkalibacterium halodurans (strain ATCC BAA-125 / DSM 18197 / FERM 7344 / JCM 9153 / C-125) (Bacillus halodurans), this protein is Ribonuclease 3.